A 98-amino-acid chain; its full sequence is Large ribosomal subunit protein uL23 (98 aa).

It belongs to the universal ribosomal protein uL23 family. Part of the 50S ribosomal subunit. Contacts protein L29, and trigger factor when it is bound to the ribosome.

One of the early assembly proteins it binds 23S rRNA. One of the proteins that surrounds the polypeptide exit tunnel on the outside of the ribosome. Forms the main docking site for trigger factor binding to the ribosome. This is Large ribosomal subunit protein uL23 from Lactobacillus gasseri (strain ATCC 33323 / DSM 20243 / BCRC 14619 / CIP 102991 / JCM 1131 / KCTC 3163 / NCIMB 11718 / NCTC 13722 / AM63).